The following is a 122-amino-acid chain: UPF0102 protein Gmet_2864 (122 aa).

This sequence belongs to the UPF0102 family.

The protein is UPF0102 protein Gmet_2864 of Geobacter metallireducens (strain ATCC 53774 / DSM 7210 / GS-15).